Consider the following 518-residue polypeptide: Xylose import ATP-binding protein XylG (518 aa).

ABC transporter domains are found at residues 6-245 (LQMN…VGRE) and 262-507 (FEAR…LSQP). Position 38–45 (38–45 (GENGAGKS)) interacts with ATP.

It belongs to the ABC transporter superfamily. Xylose importer (TC 3.A.1.2.4) family. The complex is composed of two ATP-binding proteins (XylG), two transmembrane proteins (XylH) and a solute-binding protein (XylF).

The protein resides in the cell inner membrane. The catalysed reaction is D-xylose(out) + ATP + H2O = D-xylose(in) + ADP + phosphate + H(+). Its function is as follows. Part of the ABC transporter complex XylFGH involved in xylose import. Responsible for energy coupling to the transport system. The protein is Xylose import ATP-binding protein XylG of Pseudomonas fluorescens (strain Pf0-1).